A 442-amino-acid polypeptide reads, in one-letter code: Histidine--tRNA ligase (442 aa).

This sequence belongs to the class-II aminoacyl-tRNA synthetase family. As to quaternary structure, homodimer.

It localises to the cytoplasm. The enzyme catalyses tRNA(His) + L-histidine + ATP = L-histidyl-tRNA(His) + AMP + diphosphate + H(+). This is Histidine--tRNA ligase (hisS) from Treponema pallidum (strain Nichols).